The primary structure comprises 321 residues: AA9 family lytic polysaccharide monooxygenase C (321 aa).

An N-terminal signal peptide occupies residues 1–18; that stretch reads MKLQLIIPFSFLISYVSA. A Cu(2+)-binding site is contributed by H19. N33 carries N-linked (GlcNAc...) asparagine glycosylation. 2 cysteine pairs are disulfide-bonded: C57-C191 and C161-C242. H103 is a Cu(2+) binding site. H177 and Q186 together coordinate O2. Residue Y188 coordinates Cu(2+). The N-linked (GlcNAc...) asparagine glycan is linked to N195. The 37-residue stretch at 283-319 folds into the CBM1 domain; it reads GTAAIYAQCGGQGWTGATVCASGSKCVVSSAFYSQCL.

This sequence belongs to the polysaccharide monooxygenase AA9 family. The cofactor is Cu(2+).

It localises to the secreted. The enzyme catalyses [(1-&gt;4)-beta-D-glucosyl]n+m + reduced acceptor + O2 = 4-dehydro-beta-D-glucosyl-[(1-&gt;4)-beta-D-glucosyl]n-1 + [(1-&gt;4)-beta-D-glucosyl]m + acceptor + H2O.. In terms of biological role, major lytic polysaccharide monooxygenase (LPMO) that depolymerizes crystalline and amorphous polysaccharides via the oxidation of scissile alpha- or beta-(1-4)-glycosidic bonds, yielding C1 and C4 oxidation products. Catalysis by LPMOs requires the reduction of the active-site copper from Cu(II) to Cu(I) by a reducing agent and H(2)O(2) or O(2) as a cosubstrate. In Botryotinia fuckeliana (strain B05.10) (Noble rot fungus), this protein is AA9 family lytic polysaccharide monooxygenase C.